The sequence spans 72 residues: Translation initiation factor IF-1 2 (72 aa).

An S1-like domain is found at 1 to 72; it reads MAKEELIEFE…TKGRINYRHK (72 aa).

It belongs to the IF-1 family. Component of the 30S ribosomal translation pre-initiation complex which assembles on the 30S ribosome in the order IF-2 and IF-3, IF-1 and N-formylmethionyl-tRNA(fMet); mRNA recruitment can occur at any time during PIC assembly.

Its subcellular location is the cytoplasm. Functionally, one of the essential components for the initiation of protein synthesis. Stabilizes the binding of IF-2 and IF-3 on the 30S subunit to which N-formylmethionyl-tRNA(fMet) subsequently binds. Helps modulate mRNA selection, yielding the 30S pre-initiation complex (PIC). Upon addition of the 50S ribosomal subunit IF-1, IF-2 and IF-3 are released leaving the mature 70S translation initiation complex. This chain is Translation initiation factor IF-1 2, found in Ralstonia nicotianae (strain ATCC BAA-1114 / GMI1000) (Ralstonia solanacearum).